A 455-amino-acid polypeptide reads, in one-letter code: MNEYTDTIVAQATPPGRGGVGIIRVSGPKAKEVALAVAGRELKTRYAEYLPFKNEDGSALDQGIALFFKGPNSFTGEDVLELQGHGGPVLMDMMIRRILKLEGIRPARPGEFSERAFMNDKLDLAQAEAIADLIDASSEEAAKSAFRSLQGAFSTKVNELVEAVIHLRIYVEAAIDFPEEEIDFLSDGKVSNDLHGIIDNLEAVRREANQGSIIREGMKVVIAGRPNAGKSSLLNALSGKDSAIVTDIAGTTRDVLREHIHIDGMPLHIIDTAGLREASNEVERIGIERAWEEIQQADRVLFMVDGTTTNDTDPKDIWPDFIERLPESMGLTVIRNKVELTGEAAGICHVNNPPLIRLSARTGEGIDSLREHLKDCMGFSGTTEGGFMARRRHLEALEQAAQHLEIGKEQLEGFMAGEILAEELRLAQQHLSEITGEFTSDDLLGRIFTSFCIGK.

Arginine 24, glutamate 81, and lysine 121 together coordinate (6S)-5-formyl-5,6,7,8-tetrahydrofolate. Residues 217-378 (GMKVVIAGRP…LREHLKDCMG (162 aa)) enclose the TrmE-type G domain. Residue asparagine 227 participates in K(+) binding. GTP contacts are provided by residues 227–232 (NAGKSS), 246–252 (TDIAGTT), 271–274 (DTAG), and 359–361 (SAR). Serine 231 is a binding site for Mg(2+). K(+) contacts are provided by threonine 246, isoleucine 248, and threonine 251. Residue threonine 252 coordinates Mg(2+). (6S)-5-formyl-5,6,7,8-tetrahydrofolate is bound at residue lysine 455.

This sequence belongs to the TRAFAC class TrmE-Era-EngA-EngB-Septin-like GTPase superfamily. TrmE GTPase family. In terms of assembly, homodimer. Heterotetramer of two MnmE and two MnmG subunits. K(+) serves as cofactor.

It localises to the cytoplasm. In terms of biological role, exhibits a very high intrinsic GTPase hydrolysis rate. Involved in the addition of a carboxymethylaminomethyl (cmnm) group at the wobble position (U34) of certain tRNAs, forming tRNA-cmnm(5)s(2)U34. This is tRNA modification GTPase MnmE from Photobacterium profundum (strain SS9).